Consider the following 194-residue polypeptide: MGMYKYIREAWKSPKKSYVGELLKKRMIQWRRDPVVKRIERPTRLDRARSLGYQAKQGYVVVRVRVRRGGRKRPRWKGGRKPSKMGMVKYSPKKSLQWIAEEKAARKFPNLEVLNSYWVGEDGMYKWFEVIMVDPHHPVIKSDPKIAWIAGKAHKGRVFRGLTSAGKRSRGLLNKGKGAEKVRPSIRAHQGKGK.

Residues 168 to 194 are disordered; sequence RSRGLLNKGKGAEKVRPSIRAHQGKGK. Residues 184–194 show a composition bias toward basic residues; it reads PSIRAHQGKGK.

The protein belongs to the eukaryotic ribosomal protein eL15 family. Part of the 50S ribosomal subunit.

This is Large ribosomal subunit protein eL15 from Thermococcus kodakarensis (strain ATCC BAA-918 / JCM 12380 / KOD1) (Pyrococcus kodakaraensis (strain KOD1)).